We begin with the raw amino-acid sequence, 387 residues long: GDSL esterase/lipase At2g23540 (387 aa).

The first 32 residues, 1-32, serve as a signal peptide directing secretion; it reads MATRASTSSRVSPAFTFLVIFFLLSLTASVEA. The active-site Nucleophile is Ser55. N-linked (GlcNAc...) asparagine glycans are attached at residues Asn139 and Asn159. Catalysis depends on residues Asp352 and His355. Asn380 carries an N-linked (GlcNAc...) asparagine glycan.

Belongs to the 'GDSL' lipolytic enzyme family.

Its subcellular location is the secreted. The polypeptide is GDSL esterase/lipase At2g23540 (Arabidopsis thaliana (Mouse-ear cress)).